A 411-amino-acid polypeptide reads, in one-letter code: MTEMSEKENEPDDAATHSPPGTVSALQETKLQRFKRSLSLKTILRSKSLENFFLRSGSELKCPTEVLLTPPTPLPPPSPPPTASDRGLATPSPSPCPVPRPLAALKPVRLHSFQEHVFKRASPCELCHQLIVGNSKQGLRCKMCKVSVHLWCSEEISHQQCPGKTSTSFRRNFSSPLLVHEPPPVCATSKESPPTGDSGKVDPVYETLRYGTSLALMNRSSFSSTSESPTRSLSERDELTEDGEGSIRSSEEGPGDSASPVFTAPAESEGPGPEEKSPGQQLPKATLRKDVGPMYSYVALYKFLPQENNDLALQPGDRIMLVDDSNEDWWKGKIGDRVGFFPANFVQRVRPGENVWRCCQPFSGNKEQGYMSLKENQICVGVGRSKDADGFIRVSSGKKRGLVPVDALTEI.

The segment at 1 to 29 is disordered; sequence MTEMSEKENEPDDAATHSPPGTVSALQET. Residues 19 to 29 are compositionally biased toward polar residues; that stretch reads PPGTVSALQET. Ser48 is subject to Phosphoserine. Residues 64 to 95 are disordered; sequence TEVLLTPPTPLPPPSPPPTASDRGLATPSPSP. Over residues 70 to 82 the composition is skewed to pro residues; that stretch reads PPTPLPPPSPPPT. The Phorbol-ester/DAG-type zinc-finger motif lies at 110 to 161; the sequence is LHSFQEHVFKRASPCELCHQLIVGNSKQGLRCKMCKVSVHLWCSEEISHQQC. Disordered stretches follow at residues 174 to 203 and 219 to 288; these read SSPL…KVDP and RSSF…ATLR. Low complexity predominate over residues 219-232; sequence RSSFSSTSESPTRS. 2 consecutive SH3 domains span residues 292–351 and 354–411; these read GPMY…RVRP and NVWR…LTEI.

As to quaternary structure, interacts (via SH3 domains) with CACNA1S. Interacts (via SH3 domains) with CACNA1C. Has much lower affinity for CACNA1C than for CACNA1S.

The protein resides in the cytoplasm. It localises to the cytosol. The protein localises to the cell membrane. Its subcellular location is the sarcolemma. Plays a redundant role in promoting the expression of calcium channel CACNA1S at the cell membrane, and thereby contributes to increased channel activity. Slows down the inactivation rate of the calcium channel CACNA1C. The protein is SH3 and cysteine-rich domain-containing protein 2 (STAC2) of Homo sapiens (Human).